The following is a 257-amino-acid chain: 1-(5-phosphoribosyl)-5-[(5-phosphoribosylamino)methylideneamino] imidazole-4-carboxamide isomerase (257 aa).

Asp-8 acts as the Proton acceptor in catalysis. The Proton donor role is filled by Asp-129.

This sequence belongs to the HisA/HisF family.

It localises to the cytoplasm. It carries out the reaction 1-(5-phospho-beta-D-ribosyl)-5-[(5-phospho-beta-D-ribosylamino)methylideneamino]imidazole-4-carboxamide = 5-[(5-phospho-1-deoxy-D-ribulos-1-ylimino)methylamino]-1-(5-phospho-beta-D-ribosyl)imidazole-4-carboxamide. It functions in the pathway amino-acid biosynthesis; L-histidine biosynthesis; L-histidine from 5-phospho-alpha-D-ribose 1-diphosphate: step 4/9. The polypeptide is 1-(5-phosphoribosyl)-5-[(5-phosphoribosylamino)methylideneamino] imidazole-4-carboxamide isomerase (Nostoc punctiforme (strain ATCC 29133 / PCC 73102)).